The following is a 469-amino-acid chain: Alpha-2C adrenergic receptor (469 aa).

Residues 1-29 (MDLQLTTNSTDSGDRGGSSNESLQRQPPS) form a disordered region. The Extracellular portion of the chain corresponds to 1–36 (MDLQLTTNSTDSGDRGGSSNESLQRQPPSQYSPAEV). N-linked (GlcNAc...) asparagine glycans are attached at residues asparagine 8 and asparagine 20. Residues 37–62 (AGLAAVVSFLIVFTIVGNVLVVIAVL) traverse the membrane as a helical segment. Residues 63–73 (TSRALKAPQNL) lie on the Cytoplasmic side of the membrane. A helical transmembrane segment spans residues 74–99 (FQVSLASADILVATLVMPFSLANELM). Residues 100–109 (NYWYFGKVWC) lie on the Extracellular side of the membrane. Residues cysteine 109 and cysteine 187 are joined by a disulfide bond. The chain crosses the membrane as a helical span at residues 110 to 132 (VIYLALDVLFCTSSIVHLCAISL). The Cytoplasmic portion of the chain corresponds to 133-154 (DRYWSVTQAVEYNLKRTPRRIK). A helical membrane pass occupies residues 155–175 (GIIVTVWLISAVISFPPLISL). The Extracellular segment spans residues 176–194 (YRDPEDDLYPQCELNDETW). Residues 195–216 (YILSSCIGSFFAPCIIMVLVYV) traverse the membrane as a helical segment. The Cytoplasmic portion of the chain corresponds to 217-386 (RIYRVAKLRT…RKVTQAREKR (170 aa)). Disordered stretches follow at residues 232-261 (KRTV…AAAA) and 279-353 (HHHH…SRLS). Basic residues predominate over residues 279 to 296 (HHHHHLHHHHHHHHHQLR). The span at 301–310 (LEDIELEESS) shows a compositional bias: acidic residues. Residues 331 to 353 (RGFSFSFSSTKGGQSAGAGSRLS) are compositionally biased toward low complexity. Residues 387-407 (FTFVLAVVMGVFVVCWFPFFF) traverse the membrane as a helical segment. The Extracellular segment spans residues 408-427 (TYSLYGICREACQVPETLFK). A helical transmembrane segment spans residues 428-448 (FFFWIGYCNSSLNPVIYTIFN). The Cytoplasmic segment spans residues 449 to 469 (QDFRRSFKHILFKKKKKTSLQ).

It belongs to the G-protein coupled receptor 1 family. Adrenergic receptor subfamily. ADRA2C sub-subfamily.

It is found in the cell membrane. Functionally, alpha-2 adrenergic receptors mediate the catecholamine-induced inhibition of adenylate cyclase through the action of G proteins. This is Alpha-2C adrenergic receptor (ADRA2C) from Didelphis virginiana (North American opossum).